Reading from the N-terminus, the 312-residue chain is Phospholipid phosphatase 3 (312 aa).

At 1–33 (MQSYKYDKAIVPESKNGGSPALNNNPRKGGSKR) the chain is on the cytoplasmic side. Position 19 is a phosphoserine (serine 19). The helical transmembrane segment at 34–54 (VLLICLDLFCLFMAALPFLII) threads the bilayer. Topologically, residues 55 to 85 (ETSTIKPYRRGFYCNDESIKYPLKVSETIND) are extracellular. A helical transmembrane segment spans residues 86–106 (AVLCAVGIVIAILAIITGEFY). At 107 to 123 (RIYYLKEKSRSTTQNPY) the chain is on the cytoplasmic side. Positions 109 to 110 (YY) match the Dityrosine basolateral targeting motif motif. Residues 124–144 (VAALYKQVGCFLFGCAISQSF) traverse the membrane as a helical segment. Topologically, residues 145-194 (TDIAKVSIGRLRPHFLSVCDPDFSQINCSEGYIQNYRCRGEDSKVQEARK) are extracellular. The interval 149–157 (KVSIGRLRP) is phosphatase sequence motif I. Residue asparagine 171 is glycosylated (N-linked (GlcNAc...) asparagine). Positions 183-185 (RGE) match the Integrin-binding motif motif. A helical transmembrane segment spans residues 195–215 (SFFSGHASFSMFTMLYLVLYL). Residues 197–200 (FSGH) are phosphatase sequence motif II. Catalysis depends on histidine 200, which acts as the Proton donors. The Cytoplasmic segment spans residues 216 to 226 (QARFTWRGARL). Residues 227-244 (LRPLLQFTLLMMAFYTGL) traverse the membrane as a helical segment. Positions 245 to 256 (SRVSDYKHHPSD) are phosphatase sequence motif III. The Extracellular segment spans residues 245 to 258 (SRVSDYKHHPSDVL). Histidine 252 serves as the catalytic Nucleophile. The helical transmembrane segment at 259-279 (AGFAQGALVACCIVFFVSDLF) threads the bilayer. The tract at residues 276 to 312 (SDLFKTKTSLSLPAPAIRREILSPVDIIDRNNHHNMV) is mediates interaction with CTNND1. At 280–312 (KTKTSLSLPAPAIRREILSPVDIIDRNNHHNMV) the chain is on the cytoplasmic side.

This sequence belongs to the PA-phosphatase related phosphoesterase family. Forms functional homodimers and homooligomers that are not required for substrate recognition and catalytic activity. Can also form heterooligomers with other PLPP2 and PLPP3. Interacts with CTNND1; negatively regulates the PLPP3-mediated stabilization of beta-catenin/CTNNB1. N-glycosylated. Contains high-mannose oligosaccharides. Detected in lung, cerebellum and heart atrium.

The protein resides in the cell membrane. It is found in the basolateral cell membrane. The protein localises to the endoplasmic reticulum membrane. Its subcellular location is the endoplasmic reticulum-Golgi intermediate compartment membrane. It localises to the golgi apparatus membrane. The protein resides in the golgi apparatus. It is found in the trans-Golgi network membrane. The protein localises to the membrane raft. It catalyses the reaction a 1,2-diacyl-sn-glycero-3-phosphate + H2O = a 1,2-diacyl-sn-glycerol + phosphate. It carries out the reaction 1,2-dihexadecanoyl-sn-glycero-3-phosphate + H2O = 1,2-dihexadecanoyl-sn-glycerol + phosphate. The enzyme catalyses 1,2-di-(9Z-octadecenoyl)-sn-glycero-3-phosphate + H2O = 1,2-di-(9Z-octadecenoyl)-sn-glycerol + phosphate. The catalysed reaction is a monoacyl-sn-glycero-3-phosphate + H2O = a monoacylglycerol + phosphate. It catalyses the reaction (9Z)-octadecenoyl-sn-glycero-3-phosphate + H2O = (9Z-octadecenoyl)-glycerol + phosphate. It carries out the reaction sphing-4-enine 1-phosphate + H2O = sphing-4-enine + phosphate. The enzyme catalyses an N-acylsphing-4-enine 1-phosphate + H2O = an N-acylsphing-4-enine + phosphate. The catalysed reaction is N-(octanoyl)-sphing-4-enine-1-phosphate + H2O = N-octanoylsphing-4-enine + phosphate. It catalyses the reaction N-(9Z-octadecenoyl)-ethanolamine phosphate + H2O = N-(9Z-octadecenoyl) ethanolamine + phosphate. It functions in the pathway lipid metabolism; phospholipid metabolism. Its activity is regulated as follows. Magnesium-independent phospholipid phosphatase. Insensitive to N-ethylmaleimide. Magnesium-independent phospholipid phosphatase of the plasma membrane that catalyzes the dephosphorylation of a variety of glycerolipid and sphingolipid phosphate esters including phosphatidate/PA, lysophosphatidate/LPA, diacylglycerol pyrophosphate/DGPP, sphingosine 1-phosphate/S1P and ceramide 1-phosphate/C1P. Also acts on N-oleoyl ethanolamine phosphate/N-(9Z-octadecenoyl)-ethanolamine phosphate, a potential physiological compound. Has both an extracellular and an intracellular phosphatase activity, allowing the hydrolysis and the cellular uptake of these bioactive lipid mediators from the milieu, regulating signal transduction in different cellular processes. Through the dephosphorylation of extracellular sphingosine-1-phosphate and the regulation of its extra- and intracellular availability, plays a role in vascular homeostasis, regulating endothelial cell migration, adhesion, survival, proliferation and the production of pro-inflammatory cytokines. By maintaining the appropriate levels of this lipid in the cerebellum, also ensure its proper development and function. Through its intracellular lipid phosphatase activity may act in early compartments of the secretory pathway, regulating the formation of Golgi to endoplasmic reticulum retrograde transport carriers. Functionally, independently of this phosphatase activity may also function in the Wnt signaling pathway and the stabilization of beta-catenin/CTNNB1, thereby regulating cell proliferation, migration and differentiation in angiogenesis or yet in tumor growth. Also plays a role in integrin-mediated cell-cell adhesion in angiogenesis. In Mus musculus (Mouse), this protein is Phospholipid phosphatase 3.